Reading from the N-terminus, the 255-residue chain is Putative SET domain-containing protein L678 (255 aa).

One can recognise an SET domain in the interval 5-176; it reads NRISEVFIKK…TGEELTDNYV (172 aa). Residues 235 to 255 are disordered; it reads LQQNSKNLKKNPKKTIKATPK.

The protein belongs to the class V-like SAM-binding methyltransferase superfamily.

The chain is Putative SET domain-containing protein L678 from Acanthamoeba polyphaga mimivirus (APMV).